We begin with the raw amino-acid sequence, 520 residues long: Protein root UVB sensitive 4 (520 aa).

Transmembrane regions (helical) follow at residues 275–295 (IQTVCFDNLGLLLAVLLNMLF) and 301–321 (LQACLPFVLYPIFSTFDLLGI).

The protein belongs to the RUS1 family.

The protein localises to the membrane. The sequence is that of Protein root UVB sensitive 4 from Arabidopsis thaliana (Mouse-ear cress).